Reading from the N-terminus, the 140-residue chain is Oocyte zinc finger protein XlCOF15 (140 aa).

5 consecutive C2H2-type zinc fingers follow at residues 6–28 (FTCK…QKIH), 34–56 (FTCT…QKVH), 62–84 (FICT…HVIH), 90–112 (FTCA…RAAH), and 118–140 (FICT…LKSH).

The protein belongs to the krueppel C2H2-type zinc-finger protein family.

The protein localises to the nucleus. May be involved in transcriptional regulation. This Xenopus laevis (African clawed frog) protein is Oocyte zinc finger protein XlCOF15.